The sequence spans 502 residues: Calnexin homolog (502 aa).

The first 19 residues, 1–19, serve as a signal peptide directing secretion; it reads MKFSAYLWWLFLNLALVKG. Over 20–481 the chain is Lumenal; that stretch reads TSLLSNVTLA…IDRILEQPLK (462 aa). N25 and N104 each carry an N-linked (GlcNAc...) asparagine glycan. Cysteines 125 and 161 form a disulfide. Residues K131 and D159 each coordinate an alpha-D-glucoside. The segment at 248–381 is p domain (Extended arm); sequence IPDVSVAKPH…PEIENPLYYE (134 aa). A run of 5 repeats spans residues 250 to 261, 267 to 278, 286 to 297, 305 to 316, and 320 to 330. 2 4 X approximate repeats regions span residues 250–316 and 320–377; these read DVSV…WWKE and GEWI…IENP. Residue N296 is glycosylated (N-linked (GlcNAc...) asparagine). An intrachain disulfide couples C332 to C338. Tandem repeats lie at residues 339 to 349, 353 to 363, and 367 to 377. E398 serves as a coordination point for an alpha-D-glucoside. 2 N-linked (GlcNAc...) asparagine glycosylation sites follow: N416 and N425. A helical transmembrane segment spans residues 482-502; the sequence is FVLTAAVVLLTTSVLCCVVFT.

This sequence belongs to the calreticulin family. Interacts with MPD1.

It localises to the endoplasmic reticulum membrane. Its function is as follows. Interacts with newly synthesized monoglucosylated glycoproteins in the endoplasmic reticulum. It may act in assisting protein assembly and/or in the retention within the ER of unassembled protein subunits. It seems to play a major role in the quality control apparatus of the ER by the retention of incorrectly folded proteins. The protein is Calnexin homolog (CNE1) of Saccharomyces cerevisiae (strain ATCC 204508 / S288c) (Baker's yeast).